Reading from the N-terminus, the 46-residue chain is Putative antitoxin VapB3 (46 aa).

This sequence belongs to the UPF0165 family.

Functionally, possibly the antitoxin component of a type II toxin-antitoxin (TA) system. Its cognate toxin is VapC3 (Potential). This Pyrococcus furiosus (strain ATCC 43587 / DSM 3638 / JCM 8422 / Vc1) protein is Putative antitoxin VapB3 (vapB3).